Here is a 219-residue protein sequence, read N- to C-terminus: 3,4-dihydroxy-2-butanone 4-phosphate synthase (219 aa).

Residues 37–38 (RE), aspartate 42, 150–154 (RRGHT), and glutamate 174 contribute to the D-ribulose 5-phosphate site. Glutamate 38 contacts Mg(2+). Histidine 153 is a binding site for Mg(2+).

The protein belongs to the DHBP synthase family. Homodimer. The cofactor is Mg(2+). Mn(2+) is required as a cofactor.

The catalysed reaction is D-ribulose 5-phosphate = (2S)-2-hydroxy-3-oxobutyl phosphate + formate + H(+). The protein operates within cofactor biosynthesis; riboflavin biosynthesis; 2-hydroxy-3-oxobutyl phosphate from D-ribulose 5-phosphate: step 1/1. Its function is as follows. Catalyzes the conversion of D-ribulose 5-phosphate to formate and 3,4-dihydroxy-2-butanone 4-phosphate. In Oleidesulfovibrio alaskensis (strain ATCC BAA-1058 / DSM 17464 / G20) (Desulfovibrio alaskensis), this protein is 3,4-dihydroxy-2-butanone 4-phosphate synthase.